Here is a 183-residue protein sequence, read N- to C-terminus: Ubiquinol-cytochrome c reductase iron-sulfur subunit (183 aa).

Residues 21-41 (LIYGTTAVGAVGVALAVWPFI) traverse the membrane as a helical segment. Residues 88 to 181 (IVVARAVDPA…YAFTDDTTVL (94 aa)) enclose the Rieske domain. Cys-121, His-123, Cys-145, and His-148 together coordinate [2Fe-2S] cluster. An intrachain disulfide couples Cys-126 to Cys-147.

This sequence belongs to the Rieske iron-sulfur protein family. In terms of assembly, the main subunits of complex b-c1 are: cytochrome b, cytochrome c1 and the Rieske protein. The cofactor is [2Fe-2S] cluster.

Its subcellular location is the cell inner membrane. The catalysed reaction is a quinol + 2 Fe(III)-[cytochrome c](out) = a quinone + 2 Fe(II)-[cytochrome c](out) + 2 H(+)(out). Component of the ubiquinol-cytochrome c reductase complex (complex III or cytochrome b-c1 complex), which is a respiratory chain that generates an electrochemical potential coupled to ATP synthesis. The chain is Ubiquinol-cytochrome c reductase iron-sulfur subunit (petA) from Rhodospirillum rubrum.